Here is a 313-residue protein sequence, read N- to C-terminus: Beta-lactamase FAR-1 (313 aa).

The N-terminal stretch at 1-28 (MPGVDISFLKKSGRRTMAAAAVIALLGG) is a signal peptide. Residue cysteine 29 is the site of N-palmitoyl cysteine attachment. The S-diacylglycerol cysteine moiety is linked to residue cysteine 29. Serine 94 serves as the catalytic Acyl-ester intermediate. Serine 154 contributes to the substrate binding site. The active-site Proton acceptor is the glutamate 190. 258-260 (KTG) contributes to the substrate binding site.

The protein belongs to the class-A beta-lactamase family.

It is found in the cell membrane. The enzyme catalyses a beta-lactam + H2O = a substituted beta-amino acid. Its activity is regulated as follows. Inhibited by clavulanic acid, and at a low level by tazobactam and sulbactam. In terms of biological role, confers high levels of resistance to amoxicillin, benzylpenicillin, piperacillin, ticarcillin and cephalothin. Also hydrolyzes aztreonam at a low level. Not active against ceftazidime, cefotaxime and imipenem. This is Beta-lactamase FAR-1 (bla) from Nocardia farcinica (strain IFM 10152).